A 240-amino-acid polypeptide reads, in one-letter code: MSTNTKFIYHRILLKISGEVLQGVNKFGIDINSLKRIVKEIKLVLQFGIQVGLVIGSGNLFRGATLSQLGVNRIVSDHIGILSTIINSLAMKDIMNSYSIPSYVMSSIPVDGICETYNYERAIDLLSNNFVVIFAAGTGNPLFTTDSAACLRGIEIKSDIILKGTKVDGVYSKDPKKYSQAVFYKRLTYKDVIQKELKVMDLSAFSLARDHNLPIRVFNINKPKSLYRIVKGYDEGTLIK.

Residues 15–18 (KISG), Gly-58, and Arg-62 each bind ATP. Residues Asp-77 and 138–145 (TGNPLFTT) contribute to the UMP site. Residues Thr-165, Tyr-171, and Asp-174 each coordinate ATP.

This sequence belongs to the UMP kinase family. Homohexamer.

Its subcellular location is the cytoplasm. The enzyme catalyses UMP + ATP = UDP + ADP. It functions in the pathway pyrimidine metabolism; CTP biosynthesis via de novo pathway; UDP from UMP (UMPK route): step 1/1. Inhibited by UTP. Functionally, catalyzes the reversible phosphorylation of UMP to UDP. This chain is Uridylate kinase, found in Buchnera aphidicola subsp. Schizaphis graminum (strain Sg).